The primary structure comprises 157 residues: Short-type peptidyl-prolyl cis-trans isomerase (157 aa).

The PPIase FKBP-type domain maps to 1-95 (MINLIKKGDY…RDERLIQEIP (95 aa)). Residues 86-137 (RDERLIQEIPKEMFADADFEPQEGMLILASGIPAKIIKVTDDTVTLDFNHEL) form an IF region.

Belongs to the FKBP-type PPIase family.

Its subcellular location is the cytoplasm. The enzyme catalyses [protein]-peptidylproline (omega=180) = [protein]-peptidylproline (omega=0). Functionally, catalyzes the cis-trans isomerization of peptidyl prolyl bonds and accelerates protein folding. Also exhibits chaperone-like activity. The sequence is that of Short-type peptidyl-prolyl cis-trans isomerase from Methanocaldococcus jannaschii (strain ATCC 43067 / DSM 2661 / JAL-1 / JCM 10045 / NBRC 100440) (Methanococcus jannaschii).